Reading from the N-terminus, the 135-residue chain is Large ribosomal subunit protein uL16c (135 aa).

Belongs to the universal ribosomal protein uL16 family. In terms of assembly, part of the 50S ribosomal subunit.

The protein resides in the plastid. Its subcellular location is the chloroplast. The protein is Large ribosomal subunit protein uL16c of Nandina domestica (Heavenly bamboo).